The sequence spans 396 residues: Probable sugar efflux transporter (396 aa).

12 helical membrane passes run 15 to 35 (VVTL…PVGL), 50 to 70 (VGIM…PFML), 81 to 101 (LICL…SWSF), 103 to 123 (VLVI…SITA), 136 to 156 (AQAL…GLPL), 170 to 190 (FFAI…LLPL), 209 to 229 (PALM…YTAY), 246 to 266 (FATA…VIFG), 275 to 295 (ALVS…LPAA), 299 to 319 (IHLG…GLGM), 333 to 353 (VAMA…ALVG), and 364 to 384 (MIGY…IIIF).

Belongs to the major facilitator superfamily. SotB (TC 2.A.1.2) family.

Its subcellular location is the cell inner membrane. In terms of biological role, involved in the efflux of sugars. The physiological role may be the reduction of the intracellular concentration of toxic sugars or sugar metabolites. The sequence is that of Probable sugar efflux transporter from Escherichia coli O17:K52:H18 (strain UMN026 / ExPEC).